Reading from the N-terminus, the 321-residue chain is Aspartate carbamoyltransferase catalytic subunit (321 aa).

Residues Arg-57 and Thr-58 each coordinate carbamoyl phosphate. An L-aspartate-binding site is contributed by Lys-85. Carbamoyl phosphate contacts are provided by Arg-107, His-142, and Gln-145. Residues Arg-175 and Arg-229 each coordinate L-aspartate. Carbamoyl phosphate is bound by residues Gly-270 and Pro-271.

The protein belongs to the aspartate/ornithine carbamoyltransferase superfamily. ATCase family. In terms of assembly, heterododecamer (2C3:3R2) of six catalytic PyrB chains organized as two trimers (C3), and six regulatory PyrI chains organized as three dimers (R2).

It carries out the reaction carbamoyl phosphate + L-aspartate = N-carbamoyl-L-aspartate + phosphate + H(+). It participates in pyrimidine metabolism; UMP biosynthesis via de novo pathway; (S)-dihydroorotate from bicarbonate: step 2/3. Functionally, catalyzes the condensation of carbamoyl phosphate and aspartate to form carbamoyl aspartate and inorganic phosphate, the committed step in the de novo pyrimidine nucleotide biosynthesis pathway. The sequence is that of Aspartate carbamoyltransferase catalytic subunit from Mycobacterium leprae (strain TN).